A 550-amino-acid chain; its full sequence is Chaperonin GroEL (550 aa).

Residues 29-32 (TAGP), K50, 86-90 (DGTTT), G416, and D498 each bind ATP.

This sequence belongs to the chaperonin (HSP60) family. In terms of assembly, forms a cylinder of 14 subunits composed of two heptameric rings stacked back-to-back. Interacts with the co-chaperonin GroES.

The protein localises to the cytoplasm. The catalysed reaction is ATP + H2O + a folded polypeptide = ADP + phosphate + an unfolded polypeptide.. In terms of biological role, together with its co-chaperonin GroES, plays an essential role in assisting protein folding. The GroEL-GroES system forms a nano-cage that allows encapsulation of the non-native substrate proteins and provides a physical environment optimized to promote and accelerate protein folding. This is Chaperonin GroEL from Anaplasma phagocytophilum (strain HZ).